Here is a 632-residue protein sequence, read N- to C-terminus: tRNA uridine 5-carboxymethylaminomethyl modification enzyme MnmG (632 aa).

FAD-binding positions include 15–20 (GAGHAG), V127, and S182. 276–290 (GARYCPSIEDKIVRF) contacts NAD(+). Residue Q373 coordinates FAD.

Belongs to the MnmG family. As to quaternary structure, homodimer. Heterotetramer of two MnmE and two MnmG subunits. Requires FAD as cofactor.

It is found in the cytoplasm. In terms of biological role, NAD-binding protein involved in the addition of a carboxymethylaminomethyl (cmnm) group at the wobble position (U34) of certain tRNAs, forming tRNA-cmnm(5)s(2)U34. The polypeptide is tRNA uridine 5-carboxymethylaminomethyl modification enzyme MnmG (Enterococcus faecalis (strain ATCC 700802 / V583)).